The chain runs to 808 residues: Type VI secretion system spike protein VgrG4b (808 aa).

The protein belongs to the VgrG protein family.

It is found in the secreted. Functionally, part of the H2 type VI secretion system (H2-T6SS) specialized secretion system, which delivers several virulence factors in both prokaryotic and eukaryotic cells during infection. Allows the delivery of the phospholipase effector PldA to target cells where it exerts its toxicity. This is Type VI secretion system spike protein VgrG4b from Pseudomonas aeruginosa (strain ATCC 15692 / DSM 22644 / CIP 104116 / JCM 14847 / LMG 12228 / 1C / PRS 101 / PAO1).